The chain runs to 446 residues: Nuclear distribution protein nudF (446 aa).

The LisH domain occupies 9-41; the sequence is QAEELHKSMVAYLSSIKASQSSNTLREELGIGD. Residues 60–86 adopt a coiled-coil conformation; the sequence is TGIARLQRKILDLESKITSLQAELDSV. WD repeat units follow at residues 113–154, 156–196, 200–240, 243–282, 285–345, 347–386, 391–430, and 432–446; these read SHRD…RTLK, HMRG…ANIR, GHDH…CVRT, SNSI…PRAA, GHDN…IKTL, GHDN…RLVK, AHGH…PAFQ, and VIAT…RVFK.

It belongs to the WD repeat LIS1/nudF family. In terms of assembly, self-associates. Interacts with nudE and dynein.

Its subcellular location is the cytoplasm. It is found in the cytoskeleton. It localises to the spindle pole. Positively regulates the activity of the minus-end directed microtubule motor protein dynein. May enhance dynein-mediated microtubule sliding by targeting dynein to the microtubule plus end. Required for nuclear migration during vegetative growth as well as development. Required for retrograde early endosome (EE) transport from the hyphal tip. Required for localization of dynein to the mitotic spindle poles. Recruits additional proteins to the dynein complex at SPBs. The chain is Nuclear distribution protein nudF from Aspergillus terreus (strain NIH 2624 / FGSC A1156).